Here is a 293-residue protein sequence, read N- to C-terminus: 4-diphosphocytidyl-2-C-methyl-D-erythritol kinase (293 aa).

The active site involves K16. Residue 99-109 (PMGAGLGGGSS) coordinates ATP. D141 is an active-site residue.

Belongs to the GHMP kinase family. IspE subfamily.

It carries out the reaction 4-CDP-2-C-methyl-D-erythritol + ATP = 4-CDP-2-C-methyl-D-erythritol 2-phosphate + ADP + H(+). Its pathway is isoprenoid biosynthesis; isopentenyl diphosphate biosynthesis via DXP pathway; isopentenyl diphosphate from 1-deoxy-D-xylulose 5-phosphate: step 3/6. Functionally, catalyzes the phosphorylation of the position 2 hydroxy group of 4-diphosphocytidyl-2C-methyl-D-erythritol. The chain is 4-diphosphocytidyl-2-C-methyl-D-erythritol kinase from Burkholderia ambifaria (strain MC40-6).